The chain runs to 449 residues: Ribulose bisphosphate carboxylase large chain (449 aa).

Lysine 5 bears the N6,N6,N6-trimethyllysine mark. The substrate site is built by asparagine 114 and threonine 164. The active-site Proton acceptor is the lysine 166. Lysine 168 is a binding site for substrate. Mg(2+) is bound by residues lysine 192, aspartate 194, and glutamate 195. N6-carboxylysine is present on lysine 192. Histidine 285 functions as the Proton acceptor in the catalytic mechanism. Arginine 286, histidine 318, and serine 370 together coordinate substrate.

Belongs to the RuBisCO large chain family. Type I subfamily. Heterohexadecamer of 8 large chains and 8 small chains; disulfide-linked. The disulfide link is formed within the large subunit homodimers. It depends on Mg(2+) as a cofactor. In terms of processing, the disulfide bond which can form in the large chain dimeric partners within the hexadecamer appears to be associated with oxidative stress and protein turnover.

Its subcellular location is the plastid. The protein localises to the chloroplast. It carries out the reaction 2 (2R)-3-phosphoglycerate + 2 H(+) = D-ribulose 1,5-bisphosphate + CO2 + H2O. The enzyme catalyses D-ribulose 1,5-bisphosphate + O2 = 2-phosphoglycolate + (2R)-3-phosphoglycerate + 2 H(+). In terms of biological role, ruBisCO catalyzes two reactions: the carboxylation of D-ribulose 1,5-bisphosphate, the primary event in carbon dioxide fixation, as well as the oxidative fragmentation of the pentose substrate in the photorespiration process. Both reactions occur simultaneously and in competition at the same active site. The chain is Ribulose bisphosphate carboxylase large chain from Zamioculcas zamiifolia (Aroid palm).